The sequence spans 134 residues: Transcription antitermination protein NusB (134 aa).

This sequence belongs to the NusB family.

Functionally, involved in transcription antitermination. Required for transcription of ribosomal RNA (rRNA) genes. Binds specifically to the boxA antiterminator sequence of the ribosomal RNA (rrn) operons. This chain is Transcription antitermination protein NusB, found in Shewanella sediminis (strain HAW-EB3).